We begin with the raw amino-acid sequence, 1006 residues long: DNA polymerase (1006 aa).

It belongs to the DNA polymerase type-B family. Interacts with OPG148/A20. Component of the Uracil-DNA glycosylase(UDG)-OPG148/A20-polymerase complex; OPG148/A20 and OPG116/UDG form a heterodimeric processivity factor that associates with OPG071/E9 to form the processive polymerase holoenzyme.

It carries out the reaction DNA(n) + a 2'-deoxyribonucleoside 5'-triphosphate = DNA(n+1) + diphosphate. Its function is as follows. Catalyzes DNA synthesis. Acquires processivity by associating with a heterodimeric processivity factor comprised of the viral OPG148/A20 and OPG116/D4 proteins, thereby forming the DNA polymerase holoenzyme. Displays 3'- to 5' exonuclease activity. Might participate in viral DNA recombination. Does not perform OPG116/D4synthesis across an abasic site. This is DNA polymerase (OPG071) from Bos taurus (Bovine).